Consider the following 262-residue polypeptide: Matrix protein (262 aa).

The tract at residues 219–243 (PSPAEGKIGRIKRPTERKEDTPSMT) is disordered.

This sequence belongs to the nucleorhabdovirus type-1 matrix protein family. As to quaternary structure, homomultimer. Interacts with nucleoprotein and with the cytoplasmic domain of glycoprotein.

The protein resides in the virion membrane. Its subcellular location is the host endomembrane system. Its function is as follows. Plays a major role in assembly and budding of virion. Completely covers the ribonucleoprotein coil and keep it in condensed bullet-shaped form. Inhibits viral transcription and stimulates replication. The protein is Matrix protein (M) of Rice yellow stunt virus (RYSV).